A 169-amino-acid chain; its full sequence is MAENQINSPEITEPSPKVQKLDHPENGNVPFFRVKKLSENAVLPSRASSLAAGYDLSSAAETKVPARGKALVPTDLSIAVPQGTYARIAPRSGLAWKYSIDVGAGVIDADYRGPVGVVLFNHSEVDFEVKVGDRIAQLIVQKIVTPEVEQVDDLDSTVRGSGGFGSTGV.

A compositionally biased stretch (polar residues) spans 1 to 10; the sequence is MAENQINSPE. Residues 1–25 form a disordered region; that stretch reads MAENQINSPEITEPSPKVQKLDHPE. Substrate contacts are provided by residues 91-93, 105-108, Gly116, Arg159, and 164-165; these read RSG, GVID, and FG.

It belongs to the dUTPase family. Homodimer. Mg(2+) is required as a cofactor. Vegetative and floral merismatic cells and provascular and vascular merismatic derivatives.

It catalyses the reaction dUTP + H2O = dUMP + diphosphate + H(+). It participates in pyrimidine metabolism; dUMP biosynthesis; dUMP from dCTP (dUTP route): step 2/2. In terms of biological role, this enzyme is involved in nucleotide metabolism: it produces dUMP, the immediate precursor of thymidine nucleotides and it decreases the intracellular concentration of dUTP so that uracil cannot be incorporated into DNA. It may have as well a metabolic role in merismatic cells. The chain is Deoxyuridine 5'-triphosphate nucleotidohydrolase from Solanum lycopersicum (Tomato).